The chain runs to 122 residues: Ribonuclease pancreatic (122 aa).

Residues 1–16 are compositionally biased toward basic and acidic residues; the sequence is ETPAEKFQRQHMDTEH. The tract at residues 1-20 is disordered; that stretch reads ETPAEKFQRQHMDTEHSTAS. The substrate site is built by K6 and R9. The active-site Proton acceptor is the H11. 4 cysteine pairs are disulfide-bonded: C25–C83, C39–C94, C57–C109, and C64–C71. Residues 40–44, K65, and R84 each bind substrate; that span reads KPLNT. Residue H117 is the Proton donor of the active site.

It belongs to the pancreatic ribonuclease family. As to quaternary structure, monomer. Interacts with and forms tight 1:1 complexes with RNH1. Dimerization of two such complexes may occur. Interaction with RNH1 inhibits this protein. Not glycosylated although the sequence N-V-T, a recognition site for carbohydrate attachment, is present. Pancreas.

The protein resides in the secreted. The catalysed reaction is an [RNA] containing cytidine + H2O = an [RNA]-3'-cytidine-3'-phosphate + a 5'-hydroxy-ribonucleotide-3'-[RNA].. It catalyses the reaction an [RNA] containing uridine + H2O = an [RNA]-3'-uridine-3'-phosphate + a 5'-hydroxy-ribonucleotide-3'-[RNA].. Endonuclease that catalyzes the cleavage of RNA on the 3' side of pyrimidine nucleotides. Acts on single-stranded and double-stranded RNA. The chain is Ribonuclease pancreatic (RNASE1) from Osphranter rufus (Red kangaroo).